A 503-amino-acid polypeptide reads, in one-letter code: Probable folate-biopterin transporter 6 (503 aa).

12 consecutive transmembrane segments (helical) span residues 56 to 76, 101 to 121, 128 to 148, 153 to 173, 194 to 214, 221 to 241, 281 to 301, 314 to 334, 344 to 364, 369 to 389, 404 to 424, and 450 to 470; these read SFVL…GSIF, LYYI…VFPI, PYFV…VVLG, ALAL…DVVI, LCMV…GVFV, GALG…FFIY, LYMF…FYWY, FVGI…LIYH, NILF…LVFI, LTLG…TKMI, LCPL…DSFG, and WLVI…VFLV.

It belongs to the major facilitator superfamily. Folate-biopterin transporter (TC 2.A.71) family.

The protein resides in the membrane. Functionally, could mediate folate transport. The sequence is that of Probable folate-biopterin transporter 6 from Arabidopsis thaliana (Mouse-ear cress).